Reading from the N-terminus, the 231-residue chain is Transcriptional regulatory protein KdpE (231 aa).

The 114-residue stretch at 4–117 (KILIIEDDHA…ELRARIRVIE (114 aa)) folds into the Response regulatory domain. Position 53 is a 4-aspartylphosphate (D53). The ompR/PhoB-type DNA-binding region spans 127–227 (NIVFTNGLLS…HPRIGYQMLQ (101 aa)).

Post-translationally, phosphorylated by KdpD. Phosphorylation is required for transcriptional activity.

In terms of biological role, member of the two-component regulatory system KdpD/KdpE that regulates the transcription of a series of virulence factors through sensing external K(+) concentrations. Also regulates capsular polysaccharide synthesis. Upon phosphorylation by KpdD, functions as a transcriptional regulator by direct binding to promoter regions of target genes including spa, hla, aur and geh. Represses the transcription of kdpFABC operon. This chain is Transcriptional regulatory protein KdpE, found in Staphylococcus aureus (strain NCTC 8325 / PS 47).